Reading from the N-terminus, the 141-residue chain is MAKKVTGIVKLALNAGKATPAPPVGPALGQHGVNIVMFCKEYNARTADKSGLVIPVEISIYEDRSFTFILKTPPASVLIAKAAGLNKGSGEPNTKKVGSITNKQLESIAETKLPDLNTNNIPQAMKIVGGTAKNMGILIKD.

The protein belongs to the universal ribosomal protein uL11 family. Part of the ribosomal stalk of the 50S ribosomal subunit. Interacts with L10 and the large rRNA to form the base of the stalk. L10 forms an elongated spine to which L12 dimers bind in a sequential fashion forming a multimeric L10(L12)X complex.

The protein localises to the plastid. Its subcellular location is the chloroplast. Functionally, forms part of the ribosomal stalk which helps the ribosome interact with GTP-bound translation factors. This is Large ribosomal subunit protein uL11c from Pyropia yezoensis (Susabi-nori).